Here is a 424-residue protein sequence, read N- to C-terminus: Serine--tRNA ligase (424 aa).

Position 230-232 (230-232 (TAE)) interacts with L-serine. Position 261–263 (261–263 (RSE)) interacts with ATP. L-serine is bound at residue E284. 348–351 (EISS) lines the ATP pocket. S384 is an L-serine binding site.

The protein belongs to the class-II aminoacyl-tRNA synthetase family. Type-1 seryl-tRNA synthetase subfamily. Homodimer. The tRNA molecule binds across the dimer.

The protein localises to the cytoplasm. It carries out the reaction tRNA(Ser) + L-serine + ATP = L-seryl-tRNA(Ser) + AMP + diphosphate + H(+). The catalysed reaction is tRNA(Sec) + L-serine + ATP = L-seryl-tRNA(Sec) + AMP + diphosphate + H(+). It participates in aminoacyl-tRNA biosynthesis; selenocysteinyl-tRNA(Sec) biosynthesis; L-seryl-tRNA(Sec) from L-serine and tRNA(Sec): step 1/1. Its function is as follows. Catalyzes the attachment of serine to tRNA(Ser). Is also able to aminoacylate tRNA(Sec) with serine, to form the misacylated tRNA L-seryl-tRNA(Sec), which will be further converted into selenocysteinyl-tRNA(Sec). In Streptococcus pneumoniae serotype 19F (strain G54), this protein is Serine--tRNA ligase.